The following is a 388-amino-acid chain: Chorismate synthase (388 aa).

Positions 39 and 45 each coordinate NADP(+). FMN is bound by residues arginine 130–serine 132, asparagine 251–alanine 252, alanine 296, lysine 311–threonine 315, and arginine 337.

The protein belongs to the chorismate synthase family. As to quaternary structure, homotetramer. Requires FMNH2 as cofactor.

The catalysed reaction is 5-O-(1-carboxyvinyl)-3-phosphoshikimate = chorismate + phosphate. It participates in metabolic intermediate biosynthesis; chorismate biosynthesis; chorismate from D-erythrose 4-phosphate and phosphoenolpyruvate: step 7/7. In terms of biological role, catalyzes the anti-1,4-elimination of the C-3 phosphate and the C-6 proR hydrogen from 5-enolpyruvylshikimate-3-phosphate (EPSP) to yield chorismate, which is the branch point compound that serves as the starting substrate for the three terminal pathways of aromatic amino acid biosynthesis. This reaction introduces a second double bond into the aromatic ring system. This chain is Chorismate synthase, found in Streptococcus equi subsp. equi (strain 4047).